The sequence spans 407 residues: Multifunctional CCA protein (407 aa).

Residues Gly-8 and Arg-11 each coordinate ATP. 2 residues coordinate CTP: Gly-8 and Arg-11. Residues Asp-21 and Asp-23 each coordinate Mg(2+). ATP-binding residues include Arg-91, Arg-137, and Arg-140. Residues Arg-91, Arg-137, and Arg-140 each coordinate CTP. Residues 228 to 329 (TGIHTLMVAQ…IKIFDKMDVW (102 aa)) enclose the HD domain.

Belongs to the tRNA nucleotidyltransferase/poly(A) polymerase family. Bacterial CCA-adding enzyme type 1 subfamily. In terms of assembly, monomer. Can also form homodimers and oligomers. It depends on Mg(2+) as a cofactor. Ni(2+) is required as a cofactor.

The catalysed reaction is a tRNA precursor + 2 CTP + ATP = a tRNA with a 3' CCA end + 3 diphosphate. It carries out the reaction a tRNA with a 3' CCA end + 2 CTP + ATP = a tRNA with a 3' CCACCA end + 3 diphosphate. Its function is as follows. Catalyzes the addition and repair of the essential 3'-terminal CCA sequence in tRNAs without using a nucleic acid template. Adds these three nucleotides in the order of C, C, and A to the tRNA nucleotide-73, using CTP and ATP as substrates and producing inorganic pyrophosphate. tRNA 3'-terminal CCA addition is required both for tRNA processing and repair. Also involved in tRNA surveillance by mediating tandem CCA addition to generate a CCACCA at the 3' terminus of unstable tRNAs. While stable tRNAs receive only 3'-terminal CCA, unstable tRNAs are marked with CCACCA and rapidly degraded. In Aliivibrio fischeri (strain ATCC 700601 / ES114) (Vibrio fischeri), this protein is Multifunctional CCA protein.